We begin with the raw amino-acid sequence, 101 residues long: UPF0235 protein Mevan_0378 (101 aa).

This sequence belongs to the UPF0235 family.

This chain is UPF0235 protein Mevan_0378, found in Methanococcus vannielii (strain ATCC 35089 / DSM 1224 / JCM 13029 / OCM 148 / SB).